A 510-amino-acid polypeptide reads, in one-letter code: MTSTVPAETSLNKFEKLKSEKDGLAVKSELEDFARLGWEAMDETDRDHRLRWMGVFFRPVSQGKFMLRMRIPNGILTSGQIRVLAEVVERYGEDGNADITTRPNLQLRGIRLEDIPDIFRRFEQAGLTSIQSGMDNVRNITGSPVAGIDADELIDTRGLVRKVQDMITNNGEGNPSFSNLPRKFNIAIAGCRDNSVHAEINDIAFVPAYKDGKLGFNVLVGGFFSAKRCEAAVPLNAWVDPRDVVALCEAILIVYRITGCGANRQKSRLMWLIDEWGMDKFRAEVEQQLGHPLQTAAPKDEILWDKRDHIGIHAQKKPGLNYVGLLVPVGRLYAPMFDLARIAEVYGDGEMRLTVERKRDHSRTCPMSSVASLLKEPLLEKFSVSPGLLVRSLVSCTGAQFCNFALIETKNRAMALIRELESELELARPVRIHWTGCPNSCGQPQVADIGLMGTKVRKDGKATEGVDLYMGGKVGKHAELGTCVQKGIPCDDLKPILRNLLIEHFGARPK.

[4Fe-4S] cluster is bound by residues Cys-396, Cys-402, Cys-437, and Cys-441. Cys-441 is a binding site for siroheme.

The protein belongs to the nitrite and sulfite reductase 4Fe-4S domain family.

The enzyme catalyses 6 oxidized [2Fe-2S]-[ferredoxin] + NH4(+) + 2 H2O = nitrite + 6 reduced [2Fe-2S]-[ferredoxin] + 8 H(+). The sequence is that of Ferredoxin--nitrite reductase (nirA) from Leptolyngbya laminosa (Phormidium laminosum).